Consider the following 295-residue polypeptide: Ethanolamine ammonia-lyase small subunit (295 aa).

Adenosylcob(III)alamin contacts are provided by Val207, Glu228, and Cys258.

It belongs to the EutC family. The basic unit is a heterodimer which dimerizes to form tetramers. The heterotetramers trimerize; 6 large subunits form a core ring with 6 small subunits projecting outwards. Requires adenosylcob(III)alamin as cofactor.

It localises to the bacterial microcompartment. The catalysed reaction is ethanolamine = acetaldehyde + NH4(+). Its pathway is amine and polyamine degradation; ethanolamine degradation. Its function is as follows. Catalyzes the deamination of various vicinal amino-alcohols to oxo compounds. Allows this organism to utilize ethanolamine as the sole source of nitrogen and carbon in the presence of external vitamin B12. The chain is Ethanolamine ammonia-lyase small subunit from Escherichia coli O81 (strain ED1a).